We begin with the raw amino-acid sequence, 272 residues long: Eukaryotic translation initiation factor 3 subunit G (272 aa).

Disordered regions lie at residues Met1–Ile28 and Ala157–Asp188. The region spanning Thr190–Pro268 is the RRM domain.

Belongs to the eIF-3 subunit G family. As to quaternary structure, component of the eukaryotic translation initiation factor 3 (eIF-3) complex.

Its subcellular location is the cytoplasm. Functionally, RNA-binding component of the eukaryotic translation initiation factor 3 (eIF-3) complex, which is involved in protein synthesis of a specialized repertoire of mRNAs and, together with other initiation factors, stimulates binding of mRNA and methionyl-tRNAi to the 40S ribosome. The eIF-3 complex specifically targets and initiates translation of a subset of mRNAs involved in cell proliferation. This subunit can bind 18S rRNA. This chain is Eukaryotic translation initiation factor 3 subunit G, found in Aedes aegypti (Yellowfever mosquito).